Reading from the N-terminus, the 774-residue chain is Potassium/sodium hyperpolarization-activated cyclic nucleotide-gated channel 3 (774 aa).

The segment at 1-48 (MEAEQRPAAGASEGATPGLEAVPPVAPPPATAASGPIPKSGPEPKRRH) is disordered. Residues 1-97 (MEAEQRPAAG…PYSDFRFYWD (97 aa)) are Cytoplasmic-facing. An involved in subunit assembly region spans residues 46–91 (RRHLGTLLQPTVNKFSLRVFGSHKAVEIEQERVKSAGAWIIHPYSD). Residues 98–118 (LIMLLLMVGNLIVLPVGITFF) form a helical membrane-spanning segment. Residues 119–124 (KEENSP) are Extracellular-facing. The helical transmembrane segment at 125 to 145 (PWIVFNVLSDTFFLLDLVLNF) threads the bilayer. Residues 146–171 (RTGIVVEEGAEILLAPRAIRTRYLRT) are Cytoplasmic-facing. The helical transmembrane segment at 172–192 (WFLVDLISSIPVDYIFLVVEL) threads the bilayer. Over 193-201 (EPRLDAEVY) the chain is Extracellular. Residues 202–222 (KTARALRIVRFTKILSLLRLL) form a helical; Voltage-sensor membrane-spanning segment. At 223–253 (RLSRLIRYIHQWEEIFHMTYDLASAVVRIFN) the chain is on the cytoplasmic side. Residues 254-274 (LIGMMLLLCHWDGCLQFLVPM) form a helical membrane-spanning segment. Over 275–297 (LQDFPPDCWVSINHMVNHSWGRQ) the chain is Extracellular. The N-linked (GlcNAc...) asparagine glycan is linked to N291. An intramembrane region (pore-forming) is located at residues 298–319 (YSHALFKAMSHMLCIGYGQQAP). At 320–329 (VGMPDVWLTM) the chain is on the extracellular side. A helical membrane pass occupies residues 330–350 (LSMIVGATCYAMFIGHATALI). The Cytoplasmic portion of the chain corresponds to 351–774 (QSLDSSRRQY…PRGLQLSANM (424 aa)). An interaction with KCTD3 region spans residues 354–774 (DSSRRQYQEK…PRGLQLSANM (421 aa)). 3',5'-cyclic AMP-binding residues include G492, E493, C495, R502, T503, R543, and R546. S634 is subject to Phosphoserine. The disordered stretch occupies residues 682-774 (SLSRAGRSQV…PRGLQLSANM (93 aa)). The span at 751-763 (TAQPPRPPVPEPA) shows a compositional bias: pro residues.

It belongs to the potassium channel HCN family. As to quaternary structure, homotetramer. The potassium channel is composed of a homo- or heterotetrameric complex of pore-forming subunits. Interacts with HCN11. Interacts with KCTD3; this interaction increases cell surface expression and current density of this channel. Interacts with PEX5L. As to expression, detected in brain.

Its subcellular location is the cell membrane. It catalyses the reaction K(+)(in) = K(+)(out). The enzyme catalyses Na(+)(in) = Na(+)(out). With respect to regulation, unlike HCN2 and HCN4, HCN3 is insensitive to cyclic nucleotides, such as cAMP or cGMP. This lack of sensitivity of HCN3, despite harboring a functional cyclic nucleotide-binding domain (CNBD), may be explained by its shorter C-terminal sequence, which may alter the normal autoinhibition of the channel. Inhibited by Cs(1+) and ZD7288. Phosphatidylinositol-4,5-bisphosphate (PIP(2)) shifts HCN3 activation to more depolarized potentials and accelerated activation kinetics. Its function is as follows. Hyperpolarization-activated ion channel that are permeable to sodium and potassium ions, with an about 3:1 preference for potassium ions. Contributes to the native pacemaker currents in heart (If) and in neurons (Ih). In particular, plays a pivotal role in maintaining excitability and promoting rhythmic burst firing within hypothalamic nuclei. Exerts a significant influence on the configuration of the cardiac action potential waveform. Does not appear to play a prominent role in the processing of acute, neuropathic, or inflammatory pain. The polypeptide is Potassium/sodium hyperpolarization-activated cyclic nucleotide-gated channel 3 (HCN3) (Homo sapiens (Human)).